We begin with the raw amino-acid sequence, 945 residues long: Glutamyl aminopeptidase (945 aa).

Topologically, residues Met-1–His-18 are cytoplasmic. Residues Val-19–Leu-39 form a helical; Signal-anchor for type II membrane protein membrane-spanning segment. At Thr-40–Pro-945 the chain is on the extracellular side. A disordered region spans residues Cys-43–Ser-77. Asn-116 and Asn-189 each carry an N-linked (GlcNAc...) asparagine glycan. Glu-215 provides a ligand contact to substrate. An N-linked (GlcNAc...) asparagine glycan is attached at Asn-316. Gly-349–Asn-353 is a substrate binding site. A Zn(2+)-binding site is contributed by His-385. Glu-386 functions as the Proton acceptor in the catalytic mechanism. Zn(2+)-binding residues include His-389 and Glu-408. N-linked (GlcNAc...) asparagine glycans are attached at residues Asn-546, Asn-601, Asn-637, Asn-669, Asn-754, and Asn-792. Arg-878 contacts substrate.

It belongs to the peptidase M1 family. In terms of assembly, homodimer; disulfide-linked. Zn(2+) is required as a cofactor. In terms of tissue distribution, early B-lineage cells and certain stromal cell of hemopoietic tissues. Also expressed by capillary endothelial cells, placenta, and epithelial cells of the intestine and proximal renal tubules.

It is found in the cell membrane. It carries out the reaction Release of N-terminal glutamate (and to a lesser extent aspartate) from a peptide.. With respect to regulation, substrate specificity is modulated by calcium which enhances the enzymatic activity for cleavage of acidic residues while reducing its activity with basic residues. Inhibited by aminopeptidase inhibitors amastatin and bestatin. Functionally, regulates central hypertension through its calcium-modulated preference to cleave N-terminal acidic residues from peptides such as angiotensin II. The sequence is that of Glutamyl aminopeptidase (Enpep) from Mus musculus (Mouse).